The chain runs to 548 residues: 5-aminolevulinate synthase, mitochondrial (548 aa).

The N-terminal 22 residues, 1–22 (MQRSIFARFGNSSAAVSTLNRL), are a transit peptide targeting the mitochondrion. Substrate is bound by residues Arg91, Ser204, and Lys223. Residues Ser256, His284, and Thr334 each contribute to the pyridoxal 5'-phosphate site. Lys337 is a catalytic residue. N6-(pyridoxal phosphate)lysine is present on Lys337. Residues Thr366 and Thr367 each contribute to the pyridoxal 5'-phosphate site. Thr452 contacts substrate.

The protein belongs to the class-II pyridoxal-phosphate-dependent aminotransferase family. Homodimer. Interacts with MCX1. It depends on pyridoxal 5'-phosphate as a cofactor.

Its subcellular location is the mitochondrion matrix. The catalysed reaction is succinyl-CoA + glycine + H(+) = 5-aminolevulinate + CO2 + CoA. Its pathway is porphyrin-containing compound metabolism; protoporphyrin-IX biosynthesis; 5-aminolevulinate from glycine: step 1/1. With respect to regulation, ihnhibited by hemin. Functionally, catalyzes the synthesis of 5-aminolevulinate (ALA) from succinyl-CoA and glycine, the first and rate-limiting step in heme biosynthesis. This chain is 5-aminolevulinate synthase, mitochondrial, found in Saccharomyces cerevisiae (strain ATCC 204508 / S288c) (Baker's yeast).